A 647-amino-acid polypeptide reads, in one-letter code: DNA ligase (647 aa).

NAD(+)-binding positions include 30–34, 79–80, and glutamate 106; these read DEEYD and SM. The active-site N6-AMP-lysine intermediate is lysine 108. Residues arginine 129, glutamate 163, and lysine 301 each contribute to the NAD(+) site. Residues cysteine 395, cysteine 398, cysteine 411, and cysteine 416 each coordinate Zn(2+). Residues 569–647 enclose the BRCT domain; sequence SISNALSGKT…SEYERLKLEV (79 aa).

This sequence belongs to the NAD-dependent DNA ligase family. LigA subfamily. Mg(2+) is required as a cofactor. The cofactor is Mn(2+).

It carries out the reaction NAD(+) + (deoxyribonucleotide)n-3'-hydroxyl + 5'-phospho-(deoxyribonucleotide)m = (deoxyribonucleotide)n+m + AMP + beta-nicotinamide D-nucleotide.. Functionally, DNA ligase that catalyzes the formation of phosphodiester linkages between 5'-phosphoryl and 3'-hydroxyl groups in double-stranded DNA using NAD as a coenzyme and as the energy source for the reaction. It is essential for DNA replication and repair of damaged DNA. The chain is DNA ligase from Campylobacter concisus (strain 13826).